Consider the following 163-residue polypeptide: NADH-quinone oxidoreductase subunit I (163 aa).

4Fe-4S ferredoxin-type domains follow at residues 55–84 (RRYENGEERCIACKLCEAVCPANAITIESE) and 94–123 (TQYDIDMFKCIYCGFCEEACPVDAVVETRV). Residues C64, C67, C70, C74, C103, C106, C109, and C113 each coordinate [4Fe-4S] cluster.

Belongs to the complex I 23 kDa subunit family. NDH-1 is composed of 14 different subunits. Subunits NuoA, H, J, K, L, M, N constitute the membrane sector of the complex. The cofactor is [4Fe-4S] cluster.

It is found in the cell inner membrane. The catalysed reaction is a quinone + NADH + 5 H(+)(in) = a quinol + NAD(+) + 4 H(+)(out). In terms of biological role, NDH-1 shuttles electrons from NADH, via FMN and iron-sulfur (Fe-S) centers, to quinones in the respiratory chain. The immediate electron acceptor for the enzyme in this species is believed to be ubiquinone. Couples the redox reaction to proton translocation (for every two electrons transferred, four hydrogen ions are translocated across the cytoplasmic membrane), and thus conserves the redox energy in a proton gradient. This chain is NADH-quinone oxidoreductase subunit I, found in Hydrogenovibrio crunogenus (strain DSM 25203 / XCL-2) (Thiomicrospira crunogena).